The following is a 563-amino-acid chain: Solute carrier family 22 member 1 (563 aa).

At 1–21 the chain is on the cytoplasmic side; the sequence is MLTVDDVLEQVGEFGWFQKQT. A helical transmembrane segment spans residues 22–42; the sequence is FLILCLLSAAFAPIYVGIVFL. The Extracellular segment spans residues 43–144; the sequence is AFTPDHRCRS…LVCDDSWKVD (102 aa). Asn71 is a glycosylation site (N-linked (GlcNAc...) asparagine). Residues 145-165 traverse the membrane as a helical segment; sequence LFQSCVNLGFFLGSLGVGYIA. Residues 166–171 lie on the Cytoplasmic side of the membrane; the sequence is DRFGRK. A helical transmembrane segment spans residues 172–192; the sequence is VCLLATTLTCASLGVLTAVAP. Topologically, residues 193–196 are extracellular; the sequence is DYTS. A helical membrane pass occupies residues 197–219; sequence LLIFRLLQGLVSKGSWTAGYTLI. Residues 220–232 lie on the Cytoplasmic side of the membrane; the sequence is TEFVGLGYRRTVA. Residues 233-253 form a helical membrane-spanning segment; that stretch reads ILYQMAFTVGLVLLSGLAYIL. The Extracellular segment spans residues 254–257; the sequence is PHWR. The chain crosses the membrane as a helical span at residues 258–278; the sequence is WLQLAVSLPIFLLLFRFWFVP. Positions 278 to 282 match the Proline-rich sequence motif; the sequence is PESPR. Topologically, residues 279–342 are cytoplasmic; the sequence is ESPRWLLSQK…FRTPNLRKYT (64 aa). Residue Ser328 is modified to Phosphoserine. The chain crosses the membrane as a helical span at residues 343 to 363; it reads FILMYLWFTSSVVYQGLIMHV. Topologically, residues 364–371 are extracellular; it reads GATGGNLY. Residues 372–392 traverse the membrane as a helical segment; the sequence is LDFLYSALVEFPAGFIILVTI. Residues 393–398 are Cytoplasmic-facing; that stretch reads DRFGRR. The chain crosses the membrane as a helical span at residues 399-418; the sequence is YPLATSNLAAGLACFLMIFI. Residues 419–423 lie on the Extracellular side of the membrane; it reads PHDLP. A helical transmembrane segment spans residues 424 to 446; that stretch reads WLNIMVACVGRMGITIVFQMVCL. The Cytoplasmic portion of the chain corresponds to 447 to 459; sequence VNAELFPTFIRNL. The helical transmembrane segment at 460-480 threads the bilayer; that stretch reads GMMVCSSLCDLGGVLTPFLVF. The Extracellular segment spans residues 481–487; that stretch reads RLMEVWQ. Residues 488–508 form a helical membrane-spanning segment; that stretch reads GSPLILFAALGLVAGGMTLLL. At 509–563 the chain is on the cytoplasmic side; it reads PETKGVTLPETIEDAENLQRKAKPKENKIYLQVQTSELNTQAAERDASQGTAQQK.

The protein belongs to the major facilitator (TC 2.A.1) superfamily. Organic cation transporter (TC 2.A.1.19) family. Phosphorylated.

It localises to the basolateral cell membrane. Its subcellular location is the apical cell membrane. The protein resides in the lateral cell membrane. The protein localises to the basal cell membrane. It is found in the cell membrane. It catalyses the reaction 1-methylnicotinamide(out) = 1-methylnicotinamide(in). The enzyme catalyses dopamine(out) = dopamine(in). It carries out the reaction serotonin(out) = serotonin(in). The catalysed reaction is (R)-adrenaline(out) = (R)-adrenaline(in). It catalyses the reaction (R)-noradrenaline(out) = (R)-noradrenaline(in). The enzyme catalyses histamine(out) = histamine(in). It carries out the reaction guanidine(out) = guanidine(in). The catalysed reaction is choline(out) = choline(in). It catalyses the reaction acetylcholine(in) = acetylcholine(out). The enzyme catalyses thiamine(in) = thiamine(out). It carries out the reaction spermidine(in) = spermidine(out). The catalysed reaction is agmatine(out) = agmatine(in). It catalyses the reaction putrescine(out) = putrescine(in). The enzyme catalyses (R)-carnitine(in) = (R)-carnitine(out). It carries out the reaction O-isobutanoyl-(R)-carnitine(in) = O-isobutanoyl-(R)-carnitine(out). The catalysed reaction is O-acetyl-(R)-carnitine(in) = O-acetyl-(R)-carnitine(out). It catalyses the reaction O-3-hydroxybutanoyl-(R)-carnitine(in) = O-3-hydroxybutanoyl-(R)-carnitine(out). The enzyme catalyses O-propanoyl-(R)-carnitine(in) = O-propanoyl-(R)-carnitine(out). It carries out the reaction O-butanoyl-(R)-carnitine(in) = O-butanoyl-(R)-carnitine(out). The catalysed reaction is O-2-methylbutanoyl-(R)-carnitine(in) = O-2-methylbutanoyl-(R)-carnitine(out). It catalyses the reaction O-3-methylbutanoyl-(R)-carnitine(in) = O-3-methylbutanoyl-(R)-carnitine(out). The enzyme catalyses O-hexanoyl-(R)-carnitine(in) = O-hexanoyl-(R)-carnitine(out). It carries out the reaction L-histidyl-L-proline diketopiperazine(in) = L-histidyl-L-proline diketopiperazine(out). The catalysed reaction is (R)-salsolinol(in) = (R)-salsolinol(out). It catalyses the reaction prostaglandin F2alpha(out) = prostaglandin F2alpha(in). The enzyme catalyses prostaglandin E2(out) = prostaglandin E2(in). Its activity is regulated as follows. Phosphorylation of the transporter leads to changes in its substrate affinity, resulting in a regulation of the transport activity. In contrast with rat ortholog, ASP uptake is inhibited by protein kinase A (PKA) and C (PKC) activation. ASP uptake is also endogenously activated by calmodulin, the calmodulin-dependent kinase II and LCK tyrosine kinase. Inhibited by cGMP, most likely through a cGMP-binding protein that interacts with OCT1. Functionally, electrogenic voltage-dependent transporter that mediates the transport of a variety of organic cations such as endogenous bioactive amines, cationic drugs and xenobiotics. Functions as a pH- and Na(+)-independent, bidirectional transporter. Cation cellular uptake or release is driven by the electrochemical potential (i.e. membrane potential and concentration gradient) and substrate selectivity. Hydrophobicity is a major requirement for recognition in polyvalent substrates and inhibitors. Primarily expressed in the basolateral membrane of hepatocytes and proximal tubules and involved in the uptake and disposition of cationic compounds from the blood by hepatic and renal clearance. Most likely functions as an uptake carrier in enterocytes contributing to the intestinal elimination of organic cations from the systemic circulation. Transports endogenous monoamines such as N-1-methylnicotinamide (NMN), guanidine, neurotransmitters dopamine, serotonin, noradrenaline, adrenaline and histamine, and quaternary ammonium compound such as choline. Also transports natural polyamines such as spermidine, agmatine and putrescine at low affinity, but relatively high turnover. Involved in the hepatic and intestinal uptake of the vitamin B1/thiamine, hence regulating hepatic lipid and energy metabolism. Contributes to the influx and efflux of fatty acid carriers carnitines and acylcarnitines across the basolateral membrane of hepatocytes, from the liver to the systemic circulation and inversely and may be involved in regulating the systemic availability of hepatic acylcarnitines. Also capable of transporting non-amine endogenous compounds such as prostaglandin E2 (PGE2) and prostaglandin F2-alpha (PGF2-alpha). May contribute to the transport of cationic compounds in testes across the blood-testis-barrier. Also mediates the uptake of xenobiotics tributylmethylammonium (TBuMA), quinidine, N-methyl-quinine (NMQ), N-methyl-quinidine (NMQD) N-(4,4-azo-n-pentyl)-quinuclidine (APQ), azidoprocainamide methoiodide (AMP), N-(4,4-azo-n-pentyl)-21-deoxyajmalinium (APDA) and 4-(4-(dimethylamino)styryl)-N-methylpyridinium (ASP). This chain is Solute carrier family 22 member 1 (SLC22A1), found in Bos taurus (Bovine).